A 264-amino-acid chain; its full sequence is S-adenosylmethionine decarboxylase proenzyme (264 aa).

Catalysis depends on S112, which acts as the Schiff-base intermediate with substrate; via pyruvic acid. The residue at position 112 (S112) is a Pyruvic acid (Ser); by autocatalysis. H117 serves as the catalytic Proton acceptor; for processing activity. The Proton donor; for catalytic activity role is filled by C140.

It belongs to the prokaryotic AdoMetDC family. Type 2 subfamily. In terms of assembly, heterooctamer of four alpha and four beta chains arranged as a tetramer of alpha/beta heterodimers. Requires pyruvate as cofactor. Post-translationally, is synthesized initially as an inactive proenzyme. Formation of the active enzyme involves a self-maturation process in which the active site pyruvoyl group is generated from an internal serine residue via an autocatalytic post-translational modification. Two non-identical subunits are generated from the proenzyme in this reaction, and the pyruvate is formed at the N-terminus of the alpha chain, which is derived from the carboxyl end of the proenzyme. The post-translation cleavage follows an unusual pathway, termed non-hydrolytic serinolysis, in which the side chain hydroxyl group of the serine supplies its oxygen atom to form the C-terminus of the beta chain, while the remainder of the serine residue undergoes an oxidative deamination to produce ammonia and the pyruvoyl group blocking the N-terminus of the alpha chain.

It carries out the reaction S-adenosyl-L-methionine + H(+) = S-adenosyl 3-(methylsulfanyl)propylamine + CO2. The protein operates within amine and polyamine biosynthesis; S-adenosylmethioninamine biosynthesis; S-adenosylmethioninamine from S-adenosyl-L-methionine: step 1/1. Functionally, catalyzes the decarboxylation of S-adenosylmethionine to S-adenosylmethioninamine (dcAdoMet), the propylamine donor required for the synthesis of the polyamines spermine and spermidine from the diamine putrescine. In Enterobacter sp. (strain 638), this protein is S-adenosylmethionine decarboxylase proenzyme.